Consider the following 114-residue polypeptide: Protein ELF4-LIKE 4 (114 aa).

The segment at 87–114 is disordered; the sequence is SVDASSEGESSGTLKSDGKANQKRFRSG. Positions 89 to 100 are enriched in polar residues; the sequence is DASSEGESSGTL.

Belongs to the EARLY FLOWERING 4 family. Homodimer.

The protein resides in the nucleus. Functionally, component of the central CCA1/LHY-TOC1 feedback loop in the circadian clock that promotes clock accuracy and is required for sustained rhythms in the absence of daily light/dark cycles. The protein is Protein ELF4-LIKE 4 (EFL4) of Arabidopsis thaliana (Mouse-ear cress).